The primary structure comprises 402 residues: Multidrug resistance protein MdtH (402 aa).

11 helical membrane passes run 13–33 (YFLL…FPLI), 34–54 (SIRF…ALGL), 99–116 (PWVL…GTLF), 139–159 (LLMM…SWLL), 165–185 (LVCG…AWLL), 214–234 (VLTL…LPVM), 243–263 (AAVK…LYPL), 277–297 (LMAG…ASNL), 300–320 (LFTL…ARET), 340–360 (LGLA…FDAG), and 368–388 (LPWA…WWQF).

It belongs to the major facilitator superfamily. DHA1 family. MdtH (TC 2.A.1.2.21) subfamily.

It is found in the cell inner membrane. The protein is Multidrug resistance protein MdtH of Cronobacter sakazakii (strain ATCC BAA-894) (Enterobacter sakazakii).